The following is a 212-amino-acid chain: Glutathione S-transferase (212 aa).

A GST N-terminal domain is found at 1–82 (MGMKLHGPAM…YIAHTYADKG (82 aa)). Residues Ser11, 12–13 (PA), 40–41 (HK), 53–54 (QV), and 66–67 (ES) contribute to the glutathione site. Positions 89-212 (DPKKMAIMSV…AWSKAIEYKQ (124 aa)) constitute a GST C-terminal domain.

Belongs to the GST superfamily. Phi family.

It carries out the reaction RX + glutathione = an S-substituted glutathione + a halide anion + H(+). In terms of biological role, conjugation of reduced glutathione to a wide number of exogenous and endogenous hydrophobic electrophiles. This Hyoscyamus muticus (Egyptian henbane) protein is Glutathione S-transferase.